The following is a 508-amino-acid chain: Bestrophin-2 (508 aa).

Over 1-31 (MTVTYTARVANARFGGFSQLLLLWRGSIYKL) the chain is Cytoplasmic. Residue Ala10 participates in Ca(2+) binding. A helical transmembrane segment spans residues 32 to 51 (LWRELLCFLGLYMALSAAYR). Residues 52-60 (FLLAEEQKR) are Extracellular-facing. A helical transmembrane segment spans residues 61–82 (YFEKLVIYCDQYASLIPVSFVL). Topologically, residues 83–238 (GFYVTLVVHR…WISIPLVYTQ (156 aa)) are cytoplasmic. The helical transmembrane segment at 239-255 (VVTIAVYSYFLACLIGR) threads the bilayer. Topologically, residues 256-274 (QFLDPAQGYKDHTLDLCVP) are extracellular. A helical membrane pass occupies residues 275 to 288 (IFTLLQFFFYAGWL). Over 289-508 (KVAEQLINPF…PIGEEEESPA (220 aa)) the chain is Cytoplasmic. Ca(2+) contacts are provided by Gln293, Asn296, Asp301, and Asp304. The disordered stretch occupies residues 455–508 (LREPELEPPACPEPPAPIPGPTPEPFTTVSIPGPRAPAPPWLPSPIGEEEESPA). Composition is skewed to pro residues over residues 461-478 (EPPACPEPPAPIPGPTPE) and 488-497 (PRAPAPPWLP).

It belongs to the anion channel-forming bestrophin (TC 1.A.46) family. Calcium-sensitive chloride channel subfamily. Pentamer. Interacts with GLUL; this interaction tethers a fraction of GLUL to the membrane, causing a decrease of cytosolic glutamine synthase (GS) activity and inhibits the chloride channel activity of BEST2 by affecting the gating at the aperture in the absence of intracellular glutamate. In terms of tissue distribution, expressed in mucin-secreting colonic goblet cells.

The protein localises to the cell membrane. The protein resides in the basolateral cell membrane. It catalyses the reaction chloride(in) = chloride(out). The catalysed reaction is hydrogencarbonate(in) = hydrogencarbonate(out). The enzyme catalyses L-glutamate(out) = L-glutamate(in). It carries out the reaction iodide(out) = iodide(in). It catalyses the reaction L-glutamine(out) = L-glutamine(in). With respect to regulation, chloride channel activity is allosterically inhibited by GLUL/glutamine synthase (GS) which affects the gating at the aperture in the absence of intracellular glutamate. Inhibitory effect of GLUL is relieved upon increasing of intracellular level of L-glutamate. Its function is as follows. Ligand-gated anion channel that allows the movement of anions across cell membranes when activated by calcium (Ca2+). Transports a large specter of anions, namely mediates the movement of chloride, L-glutamate and iodide. Calcium-binding triggers the dilation of the aperture, but calcium-dependent gating is only effective when the size of the passing anion is bigger than the closed aperture. Mediates the calcium-activated hydrogencarbonate movement and participates in colonic hydrogencarbonate secretion concomitant with mucin secretion. In non-pigmented epithelium (NPE), mediates the efflux of intracellular L-glutamate; binding of intracellular L-glutamate activates and open both the neck and the aperture of the channel, leading to L-glutamate exit promoting chloride influx movement from the extracellular side in trans. Also exhibits a directional permeability for intracellular glutamine, in a similar manner as for L-glutamate. The protein is Bestrophin-2 of Mus musculus (Mouse).